The following is a 295-amino-acid chain: Ribosomal RNA small subunit methyltransferase A (295 aa).

S-adenosyl-L-methionine-binding residues include asparagine 28, leucine 30, glycine 55, glutamate 76, aspartate 101, and asparagine 131.

Belongs to the class I-like SAM-binding methyltransferase superfamily. rRNA adenine N(6)-methyltransferase family. RsmA subfamily.

The protein resides in the cytoplasm. It catalyses the reaction adenosine(1518)/adenosine(1519) in 16S rRNA + 4 S-adenosyl-L-methionine = N(6)-dimethyladenosine(1518)/N(6)-dimethyladenosine(1519) in 16S rRNA + 4 S-adenosyl-L-homocysteine + 4 H(+). In terms of biological role, specifically dimethylates two adjacent adenosines (A1518 and A1519) in the loop of a conserved hairpin near the 3'-end of 16S rRNA in the 30S particle. May play a critical role in biogenesis of 30S subunits. The sequence is that of Ribosomal RNA small subunit methyltransferase A from Pelotomaculum thermopropionicum (strain DSM 13744 / JCM 10971 / SI).